The primary structure comprises 239 residues: Ribonuclease PH (239 aa).

Phosphate contacts are provided by residues R86 and 124 to 126 (GTR).

The protein belongs to the RNase PH family. In terms of assembly, homohexameric ring arranged as a trimer of dimers.

The catalysed reaction is tRNA(n+1) + phosphate = tRNA(n) + a ribonucleoside 5'-diphosphate. Phosphorolytic 3'-5' exoribonuclease that plays an important role in tRNA 3'-end maturation. Removes nucleotide residues following the 3'-CCA terminus of tRNAs; can also add nucleotides to the ends of RNA molecules by using nucleoside diphosphates as substrates, but this may not be physiologically important. Probably plays a role in initiation of 16S rRNA degradation (leading to ribosome degradation) during starvation. The sequence is that of Ribonuclease PH from Aromatoleum aromaticum (strain DSM 19018 / LMG 30748 / EbN1) (Azoarcus sp. (strain EbN1)).